The following is a 132-amino-acid chain: ATP synthase epsilon chain (132 aa).

The protein belongs to the ATPase epsilon chain family. In terms of assembly, F-type ATPases have 2 components, CF(1) - the catalytic core - and CF(0) - the membrane proton channel. CF(1) has five subunits: alpha(3), beta(3), gamma(1), delta(1), epsilon(1). CF(0) has three main subunits: a, b and c.

Its subcellular location is the cell membrane. Produces ATP from ADP in the presence of a proton gradient across the membrane. This Desulfitobacterium hafniense (strain DSM 10664 / DCB-2) protein is ATP synthase epsilon chain.